Here is a 426-residue protein sequence, read N- to C-terminus: Serine--tRNA ligase (426 aa).

Residues 103–129 (VPNLPDDSVPTGKDENDNPEIRRWGTP) are disordered. Basic and acidic residues predominate over residues 114–125 (GKDENDNPEIRR). Residue 230-232 (TAE) participates in L-serine binding. ATP is bound at residue 261 to 263 (RSE). An L-serine-binding site is contributed by glutamate 284. 348–351 (EISS) lines the ATP pocket. An L-serine-binding site is contributed by serine 384.

This sequence belongs to the class-II aminoacyl-tRNA synthetase family. Type-1 seryl-tRNA synthetase subfamily. Homodimer. The tRNA molecule binds across the dimer.

The protein localises to the cytoplasm. The enzyme catalyses tRNA(Ser) + L-serine + ATP = L-seryl-tRNA(Ser) + AMP + diphosphate + H(+). It carries out the reaction tRNA(Sec) + L-serine + ATP = L-seryl-tRNA(Sec) + AMP + diphosphate + H(+). The protein operates within aminoacyl-tRNA biosynthesis; selenocysteinyl-tRNA(Sec) biosynthesis; L-seryl-tRNA(Sec) from L-serine and tRNA(Sec): step 1/1. Functionally, catalyzes the attachment of serine to tRNA(Ser). Is also able to aminoacylate tRNA(Sec) with serine, to form the misacylated tRNA L-seryl-tRNA(Sec), which will be further converted into selenocysteinyl-tRNA(Sec). This Dichelobacter nodosus (strain VCS1703A) protein is Serine--tRNA ligase.